Here is a 722-residue protein sequence, read N- to C-terminus: Polyribonucleotide nucleotidyltransferase (722 aa).

Mg(2+)-binding residues include Asp-487 and Asp-493. Residues Pro-554–Ile-613 enclose the KH domain. Residues Gly-623–Lys-691 enclose the S1 motif domain. Positions Lys-691–Glu-722 are disordered. The span at Leu-701 to Asp-713 shows a compositional bias: basic and acidic residues.

It belongs to the polyribonucleotide nucleotidyltransferase family. The cofactor is Mg(2+).

Its subcellular location is the cytoplasm. It catalyses the reaction RNA(n+1) + phosphate = RNA(n) + a ribonucleoside 5'-diphosphate. Its function is as follows. Involved in mRNA degradation. Catalyzes the phosphorolysis of single-stranded polyribonucleotides processively in the 3'- to 5'-direction. This chain is Polyribonucleotide nucleotidyltransferase, found in Rhodopseudomonas palustris (strain BisB5).